A 68-amino-acid chain; its full sequence is Venom-like beta-defensin (68 aa).

An N-terminal signal peptide occupies residues 1 to 24 (MRLLILFLAVVTLLSLAGPGSAEV). Cystine bridges form between C33-C60, C40-C54, and C47-C61.

In terms of tissue distribution, highly expressed in intestine, liver and spleen and expressed at lower levels in brain, kidney, lung, testis and venom gland.

Its subcellular location is the secreted. Potent antimicrobial peptide that displays activity against S.aureus and P.aeruginosa. Does not inhibit growth of E.coli. This chain is Venom-like beta-defensin, found in Ornithorhynchus anatinus (Duckbill platypus).